The sequence spans 257 residues: UPF0246 protein Sama_0917 (257 aa).

This sequence belongs to the UPF0246 family.

The polypeptide is UPF0246 protein Sama_0917 (Shewanella amazonensis (strain ATCC BAA-1098 / SB2B)).